The following is a 105-amino-acid chain: Large ribosomal subunit protein uL23 (105 aa).

It belongs to the universal ribosomal protein uL23 family. In terms of assembly, part of the 50S ribosomal subunit. Contacts protein L29, and trigger factor when it is bound to the ribosome.

Its function is as follows. One of the early assembly proteins it binds 23S rRNA. One of the proteins that surrounds the polypeptide exit tunnel on the outside of the ribosome. Forms the main docking site for trigger factor binding to the ribosome. In Ureaplasma urealyticum serovar 10 (strain ATCC 33699 / Western), this protein is Large ribosomal subunit protein uL23.